Reading from the N-terminus, the 899-residue chain is Protein suppressor of hairy wing (899 aa).

Disordered stretches follow at residues 1 to 33 (MSAQ…RTGT), 45 to 127 (AAVA…KKMD), and 171 to 206 (AKEN…AKRR). The span at 21–31 (SDGDKPKEKRT) shows a compositional bias: basic and acidic residues. A compositionally biased stretch (low complexity) spans 45-55 (AAVASKGASVS). 2 stretches are compositionally biased toward polar residues: residues 67 to 83 (KILN…STKG) and 102 to 111 (RSSAPASSAV). Residues 183 to 198 (VDEDDDDDDDDEDEGV) are compositionally biased toward acidic residues. The C2H2-type 1; atypical zinc finger occupies 218 to 240 (HVCGKCYKTFRRVKSLKKHLEFC). Residues 288–311 (INCPDCPKSFKTQTSYERHIFITH) form a C2H2-type 2 zinc finger. The C2H2-type 3; atypical zinc finger occupies 318–340 (YPCSICNAKLRSGALLKLHEQQH). 9 consecutive C2H2-type zinc fingers follow at residues 347–365 (FACK…LKCH), 379–401 (MSCK…LKQH), 412–434 (YMCH…IRTH), 440–462 (FDCD…RRYH), 468–490 (YTCT…MKRH), 496–518 (HKCN…SKTH), 522–544 (YACS…VKDH), 552–576 (FACT…AGDH), and 594–617 (TDCA…RSVH). 3 disordered regions span residues 646-665 (EQKE…GSLI), 702-734 (PLEG…VVKK), and 865-899 (GDED…ESEA). The segment covering 874 to 899 (ETDKGKDREADNTDTDTREDAVESEA) has biased composition (basic and acidic residues).

Its subcellular location is the nucleus. Component of the gypsy chromatin insulator complex which is required for the function of the gypsy chromatin insulator and other endogenous chromatin insulators. Chromatin insulators are regulatory elements which establish independent domains of transcriptional activity within eukaryotic genomes. Insulators have two defining properties; they can block the communication between an enhancer and a promoter when placed between them and can also buffer transgenes from position effect variegation (PEV). Insulators are proposed to structure the chromatin fiber into independent domains of differing transcriptional potential by promoting the formation of distinct chromatin loops. This chromatin looping may involve the formation of insulator bodies, where homotypic interactions between individual subunits of the insulator complex could promote the clustering of widely spaced insulators at the nuclear periphery. Within the gypsy insulator complex, this protein binds specifically to a region of the gypsy element located 3' of the 5' long terminal repeat (LTR), and may also mediate interaction with other endogenous insulators at sites distinct from those recognized by Cp190. Cooperates with pita and cliff to recruit Cp190 and regulate insulator function at the front-ultraabdominal (Fub) boundary. The chain is Protein suppressor of hairy wing (su(Hw)) from Drosophila virilis (Fruit fly).